Here is a 359-residue protein sequence, read N- to C-terminus: AA9 family lytic polysaccharide monooxygenase C (359 aa).

Positions 1–16 (MKTGSILAALVASASA) are cleaved as a signal peptide. Cu(2+)-binding residues include His17 and His99. Intrachain disulfides connect Cys55–Cys185 and Cys155–Cys243. The O2 site is built by His171 and Gln180. Tyr182 provides a ligand contact to Cu(2+). N-linked (GlcNAc...) asparagine glycans are attached at residues Asn189 and Asn284. The interval 244–320 (PAGGSGGSSP…NPQPTNGGNS (77 aa)) is disordered. A compositionally biased stretch (low complexity) spans 251-296 (SSPAPATTASTPKPTSASAPKPVSTTASTPKPTNGSGSGTGAAHST). The span at 307–319 (TKASNPQPTNGGN) shows a compositional bias: polar residues. One can recognise a CBM1 domain in the interval 323-358 (RAAALYGQCGGKGWTGPTSCASGTCKFSNDWYSQCL).

This sequence belongs to the polysaccharide monooxygenase AA9 family. Cu(2+) serves as cofactor.

It is found in the secreted. It carries out the reaction [(1-&gt;4)-beta-D-glucosyl]n+m + reduced acceptor + O2 = 4-dehydro-beta-D-glucosyl-[(1-&gt;4)-beta-D-glucosyl]n-1 + [(1-&gt;4)-beta-D-glucosyl]m + acceptor + H2O.. With respect to regulation, activity in inhibited by excessive amounts of H(2)O(2). In terms of biological role, lytic polysaccharide monooxygenase (LPMO) that depolymerizes crystalline and amorphous polysaccharides via the oxidation of scissile alpha- or beta-(1-4)-glycosidic bonds, yielding C4 oxidation products. Catalysis by LPMOs requires the reduction of the active-site copper from Cu(II) to Cu(I) by a reducing agent and H(2)O(2) or O(2) as a cosubstrate. Degrades various hemicelluloses, in particular xyloglucan. Active on tamarind xyloglucan and konjac glucomannan. Acts on the glucose backbone of xyloglucan, accepting various substitutions (xylose, galactose) in almost allpositions. In contrast to all previously characterized LPMOs, which are active only on polysaccharides, is able to cleave soluble cello-oligosaccharides as short as a tetramer. The cello-oligosaccharide products released by this enzyme contain a C4 gemdiol/keto group at the non-reducing end. Binds to the inner wood cell wall layer and consumes enzymatically generated H(2)O(2). This chain is AA9 family lytic polysaccharide monooxygenase C (gh61-3), found in Neurospora crassa (strain ATCC 24698 / 74-OR23-1A / CBS 708.71 / DSM 1257 / FGSC 987).